A 2197-amino-acid chain; its full sequence is Non-reducing polyketide synthase Preu6 (2197 aa).

The tract at residues 14-253 (FFCPQSRAPP…HNPENAELAK (240 aa)) is N-terminal acylcarrier protein transacylase domain (SAT). The Ketosynthase family 3 (KS3) domain maps to 375–797 (DDAIAITGAS…GSNAAVICVE (423 aa)). Residues Cys546, His681, and His720 each act as for beta-ketoacyl synthase activity in the active site. Residues 901–1198 (LVFSGQNTNA…SKPDSQVFQS (298 aa)) are malonyl-CoA:ACP transacylase (MAT) domain. Catalysis depends on Ser988, which acts as the For acyl/malonyl transferase activity. The segment at 1258–1282 (ATEASQASTTSDTIQSTPTQTVQSP) is disordered. A compositionally biased stretch (polar residues) spans 1260–1281 (EASQASTTSDTIQSTPTQTVQS). Residues 1276 to 1403 (TQTVQSPPKL…GRVILTESSV (128 aa)) form an N-terminal hotdog fold region. The 301-residue stretch at 1276-1576 (TQTVQSPPKL…FNKMEISKLA (301 aa)) folds into the PKS/mFAS DH domain. Positions 1284 to 1575 (KLISRLASLQ…RFNKMEISKL (292 aa)) are product template (PT) domain. The active-site Proton acceptor; for dehydratase activity is the His1310. Residues 1424–1576 (AEKLMSSRAY…FNKMEISKLA (153 aa)) form a C-terminal hotdog fold region. Asp1487 serves as the catalytic Proton donor; for dehydratase activity. The segment covering 1581–1591 (SVNASSPTGGR) has biased composition (polar residues). A disordered region spans residues 1581-1614 (SVNASSPTGGRTQPPAAPKTQAQPMASRPSPTPL). 2 consecutive Carrier domains span residues 1639 to 1719 (NDIG…SQKM) and 1748 to 1824 (NSIT…ATPP). O-(pantetheine 4'-phosphoryl)serine occurs at positions 1673 and 1782. The interval 1817–1841 (LGASATPPSTTGSSTPGDISTAATT) is disordered. The segment covering 1818 to 1833 (GASATPPSTTGSSTPG) has biased composition (low complexity). Residues 1870–2197 (DSYQVKTVEY…PGLDFLIQNA (328 aa)) are thioesterase (TE) domain. Catalysis depends on for thioesterase activity residues Ser1990 and Asp2137.

Pantetheine 4'-phosphate is required as a cofactor.

It catalyses the reaction 6 malonyl-CoA + 2 acetyl-CoA + 5 H(+) = o-orsellinate depside + 6 CO2 + 8 CoA + H2O. Its function is as follows. Non-reducing polyketide synthase; part of a gene cluster that mediates the biosynthesis of a yet unidentified natural product. The first step in the pathway is performed by Preu6 that condenses 2 acetyl-CoA starter units with 6 malonyl-CoA units to produce lecanoric acid (LA), also known as orsellinate depside, an intermediate that has significant antifungal activity against the plant pathogen Botryosphaeria berengeriana. The biosynthesis probably occurs via the formation of 2 orsellinate intermediates fused together by the C-terminal thioesterase (TE) domain that finally releases lecanoric acid. The chain is Non-reducing polyketide synthase Preu6 from Preussia isomera (Coprophilous fungus).